A 36-amino-acid chain; its full sequence is Cytochrome b6-f complex subunit 7 (36 aa).

Residues 5-25 (IFFVAGLVFVLTLVGMAIGFG) form a helical membrane-spanning segment.

The protein belongs to the PetM family. As to quaternary structure, the 4 large subunits of the cytochrome b6-f complex are cytochrome b6, subunit IV (17 kDa polypeptide, PetD), cytochrome f and the Rieske protein, while the 4 small subunits are PetG, PetL, PetM and PetN. The complex functions as a dimer.

The protein localises to the cell inner membrane. In terms of biological role, component of the cytochrome b6-f complex, which mediates electron transfer between photosystem II (PSII) and photosystem I (PSI), cyclic electron flow around PSI, and state transitions. The protein is Cytochrome b6-f complex subunit 7 of Gloeobacter violaceus (strain ATCC 29082 / PCC 7421).